A 547-amino-acid chain; its full sequence is Delta-guaiene synthase 3 (547 aa).

3 residues coordinate Mg(2+): D299, D303, and D444. Residues 299-303 (DDTYD) carry the DDXXD motif motif.

The protein belongs to the terpene synthase family. The cofactor is Mg(2+).

The enzyme catalyses (2E,6E)-farnesyl diphosphate = delta-guaiene + diphosphate. It carries out the reaction (2E,6E)-farnesyl diphosphate = alpha-guaiene + diphosphate. Its pathway is secondary metabolite biosynthesis; terpenoid biosynthesis. Sesquiterpene synthase involved in the biosynthesis of delta-guaiene (78.2%) and alpha-guaiene (20.9%), two structures composed of five- and seven-membered rings. Also produces 0.9% of alpha-humulene. The protein is Delta-guaiene synthase 3 (C4) of Aquilaria crassna (Eagle wood).